Reading from the N-terminus, the 249-residue chain is Bis(5'-nucleosyl)-tetraphosphatase PrpE [asymmetrical] (249 aa).

It belongs to the PrpE family. The cofactor is Ni(2+).

The catalysed reaction is P(1),P(4)-bis(5'-guanosyl) tetraphosphate + H2O = GMP + GTP + 2 H(+). Its function is as follows. Asymmetrically hydrolyzes Ap4p to yield AMP and ATP. The protein is Bis(5'-nucleosyl)-tetraphosphatase PrpE [asymmetrical] of Bacillus velezensis (strain DSM 23117 / BGSC 10A6 / LMG 26770 / FZB42) (Bacillus amyloliquefaciens subsp. plantarum).